The chain runs to 622 residues: Dynein axonemal assembly factor 1 (622 aa).

Positions 1 to 11 (MHPEVSEQQAD) are enriched in polar residues. Residues 1–80 (MHPEVSEQQA…ARNDRDDRGP (80 aa)) form a disordered region. Over residues 32 to 42 (VRKEEINETKE) the composition is skewed to basic and acidic residues. Over residues 48–59 (STTSCQSQKQQS) the composition is skewed to low complexity. Basic and acidic residues predominate over residues 62–80 (SRLECRSGYARNDRDDRGP). 6 LRR repeats span residues 101–123 (ALND…EEYT), 124–145 (GLRC…QAQS), 146–167 (ELRC…EPLQ), 168–189 (KLDA…SCLP), 190–211 (VLNT…QHLG), and 215–236 (RLCV…SVLE). The LRRCT domain maps to 249 to 288 (NPVTKHIPNYRRTVTVRLKQLTYLDDRPVFPKDRACAEAW). Basic and acidic residues predominate over residues 326–336 (EERKKARDKGE). Residues 326-363 (EERKKARDKGETPLPDSEESSSTSPEAQEKPPLGETQE) are disordered. Residues 337-351 (TPLPDSEESSSTSPE) show a composition bias toward low complexity. Phosphoserine occurs at positions 349, 464, and 487. Disordered stretches follow at residues 481–505 (SSLS…TPTG) and 535–622 (TATT…FGLD). 2 stretches are compositionally biased toward polar residues: residues 535–552 (TATT…TTRP) and 568–578 (EPNQSLPAQSS).

The protein belongs to the DNAAF1 family.

It localises to the cell projection. Its subcellular location is the cilium. Its function is as follows. Cilium-specific protein required for the stability of the ciliary architecture. Plays a role in cytoplasmic preassembly of dynein arms. Involved in regulation of microtubule-based cilia and actin-based brush border microvilli. The protein is Dynein axonemal assembly factor 1 (Dnaaf1) of Peromyscus californicus (California mouse).